The following is a 436-amino-acid chain: ATP-dependent protease ATPase subunit HslU (436 aa).

Residues Ile-19, 61–66 (GVGKTE), Asp-249, Glu-314, and Arg-386 contribute to the ATP site.

It belongs to the ClpX chaperone family. HslU subfamily. As to quaternary structure, a double ring-shaped homohexamer of HslV is capped on each side by a ring-shaped HslU homohexamer. The assembly of the HslU/HslV complex is dependent on binding of ATP.

It is found in the cytoplasm. Functionally, ATPase subunit of a proteasome-like degradation complex; this subunit has chaperone activity. The binding of ATP and its subsequent hydrolysis by HslU are essential for unfolding of protein substrates subsequently hydrolyzed by HslV. HslU recognizes the N-terminal part of its protein substrates and unfolds these before they are guided to HslV for hydrolysis. This Bartonella bacilliformis (strain ATCC 35685 / KC583 / Herrer 020/F12,63) protein is ATP-dependent protease ATPase subunit HslU.